A 603-amino-acid chain; its full sequence is UvrABC system protein C (603 aa).

The region spanning 15–92 (DQPGCYLMKD…IKKHDPRFNI (78 aa)) is the GIY-YIG domain. The UVR domain maps to 197-232 (KTVKNDLMKKMQEAAENMEFEKAGEFRDQINAIETT).

This sequence belongs to the UvrC family. Interacts with UvrB in an incision complex.

The protein resides in the cytoplasm. Its function is as follows. The UvrABC repair system catalyzes the recognition and processing of DNA lesions. UvrC both incises the 5' and 3' sides of the lesion. The N-terminal half is responsible for the 3' incision and the C-terminal half is responsible for the 5' incision. The protein is UvrABC system protein C of Listeria monocytogenes serovar 1/2a (strain ATCC BAA-679 / EGD-e).